The following is a 124-amino-acid chain: Small ribosomal subunit protein bS6 (124 aa).

Residues 101 to 124 (IMMKEVQREEARKSAQSDAPAVAA) form a disordered region. Positions 105–115 (EVQREEARKSA) are enriched in basic and acidic residues.

It belongs to the bacterial ribosomal protein bS6 family.

In terms of biological role, binds together with bS18 to 16S ribosomal RNA. This Polynucleobacter asymbioticus (strain DSM 18221 / CIP 109841 / QLW-P1DMWA-1) (Polynucleobacter necessarius subsp. asymbioticus) protein is Small ribosomal subunit protein bS6.